The chain runs to 479 residues: Kynurenine 3-monooxygenase (479 aa).

The protein belongs to the aromatic-ring hydroxylase family. KMO subfamily. Requires FAD as cofactor.

It localises to the mitochondrion outer membrane. It carries out the reaction L-kynurenine + NADPH + O2 + H(+) = 3-hydroxy-L-kynurenine + NADP(+) + H2O. It participates in cofactor biosynthesis; NAD(+) biosynthesis; quinolinate from L-kynurenine: step 1/3. Its function is as follows. Catalyzes the hydroxylation of L-kynurenine (L-Kyn) to form 3-hydroxy-L-kynurenine (L-3OHKyn). Required for synthesis of quinolinic acid. The chain is Kynurenine 3-monooxygenase from Chaetomium globosum (strain ATCC 6205 / CBS 148.51 / DSM 1962 / NBRC 6347 / NRRL 1970) (Soil fungus).